Reading from the N-terminus, the 469-residue chain is 3-isopropylmalate dehydratase large subunit (469 aa).

The [4Fe-4S] cluster site is built by Cys350, Cys410, and Cys413.

This sequence belongs to the aconitase/IPM isomerase family. LeuC type 1 subfamily. In terms of assembly, heterodimer of LeuC and LeuD. Requires [4Fe-4S] cluster as cofactor.

It catalyses the reaction (2R,3S)-3-isopropylmalate = (2S)-2-isopropylmalate. It functions in the pathway amino-acid biosynthesis; L-leucine biosynthesis; L-leucine from 3-methyl-2-oxobutanoate: step 2/4. Catalyzes the isomerization between 2-isopropylmalate and 3-isopropylmalate, via the formation of 2-isopropylmaleate. The protein is 3-isopropylmalate dehydratase large subunit of Brucella anthropi (strain ATCC 49188 / DSM 6882 / CCUG 24695 / JCM 21032 / LMG 3331 / NBRC 15819 / NCTC 12168 / Alc 37) (Ochrobactrum anthropi).